The chain runs to 344 residues: MEDSGKTFGSEEEETNYWRDLAMTYKQRAENTQEELREFQEGSREYEAELETQLQQAETRNRDLLSENNRLRMELESVKEKFEMQHSEGYRQISALEDDLAHTKAIKDQLQKYIRELEQANDDLERAKRATIMSLEDFEQRLNQAIERNAFLESELDEKENLLESVQRLKDEARDLRQELAVQQKQDKPRTPMPSSGETKRTDMAVQATGSAPSTPITHQGSSSGLNTPETFRCGLGSPSSGTPLTPAARISALNIVGDLLRKVGALESKLASCKNFMYDQSPSRKSGPALGRGTKNRDGIDRRPGSTAVGDKGSGKRLEFAKPSSQLSSPALPSTQGVVKLLL.

A self-association region spans residues 1–93 (MEDSGKTFGS…MQHSEGYRQI (93 aa)). Residues 18–188 (WRDLAMTYKQ…ELAVQQKQDK (171 aa)) are a coiled coil. The segment covering 30–47 (ENTQEELREFQEGSREYE) has biased composition (basic and acidic residues). Residues 30 to 65 (ENTQEELREFQEGSREYEAELETQLQQAETRNRDLL) form a disordered region. The interaction with PAFAH1B1 stretch occupies residues 88–156 (EGYRQISALE…ERNAFLESEL (69 aa)). Positions 167–290 (QRLKDEARDL…QSPSRKSGPA (124 aa)) are interaction with CENPF. Residues 181–243 (AVQQKQDKPR…CGLGSPSSGT (63 aa)) are disordered. Positions 208–230 (ATGSAPSTPITHQGSSSGLNTPE) are enriched in polar residues. Phosphoserine is present on serine 211. 4 positions are modified to phosphothreonine: threonine 215, threonine 228, threonine 243, and threonine 246. A lipid anchor (S-palmitoyl cysteine; by ZDHHC2, ZDHHC3 and ZDHHC7) is attached at cysteine 274. The disordered stretch occupies residues 279 to 337 (YDQSPSRKSGPALGRGTKNRDGIDRRPGSTAVGDKGSGKRLEFAKPSSQLSSPALPSTQ). Serine 282 carries the phosphoserine modification. A compositionally biased stretch (basic and acidic residues) spans 296–305 (KNRDGIDRRP). A compositionally biased stretch (low complexity) spans 324 to 335 (PSSQLSSPALPS).

This sequence belongs to the nudE family. In terms of assembly, homodimer. Interacts with CNTRL, LIS1, dynein, SLMAP and TCP1. Interacts with CENPF, dynactin, tubulin gamma, PAFAH1B1, PCM1 and PCNT. Interacts with ZNF365. Interacts with GTP-bound RAB9A and RAB9B; the interaction leads to RAB9-dynein motor tethering. Interacts (via C-terminus) with MCRS1 (via C-terminus); phosphorylation of NDE1 inhibits the interaction. In terms of processing, phosphorylated in mitosis. Phosphorylation at Thr-246 is essential for the G2/M transition. As to expression, expressed in brain, heart, kidney, liver, lung, skeletal muscle, spleen and testis.

The protein localises to the cytoplasm. It is found in the cytoskeleton. The protein resides in the microtubule organizing center. Its subcellular location is the centrosome. It localises to the spindle. The protein localises to the chromosome. It is found in the centromere. The protein resides in the kinetochore. Its subcellular location is the cleavage furrow. It localises to the cytoplasmic vesicle membrane. Required for centrosome duplication and formation and function of the mitotic spindle. Essential for the development of the cerebral cortex. May regulate the production of neurons by controlling the orientation of the mitotic spindle during division of cortical neuronal progenitors of the proliferative ventricular zone of the brain. Orientation of the division plane perpendicular to the layers of the cortex gives rise to two proliferative neuronal progenitors whereas parallel orientation of the division plane yields one proliferative neuronal progenitor and a postmitotic neuron. A premature shift towards a neuronal fate within the progenitor population may result in an overall reduction in the final number of neurons and an increase in the number of neurons in the deeper layers of the cortex. Acts as a RAB9A/B effector that tethers RAB9-associated late endosomes to the dynein motor for their retrograde transport to the trans-Golgi network. The protein is Nuclear distribution protein nudE homolog 1 of Rattus norvegicus (Rat).